The following is a 605-amino-acid chain: Probable potassium transport system protein Kup 1 (605 aa).

Helical transmembrane passes span 16-36 (ALGLVFGDIGTSPIYTLTVIF), 46-66 (VFGILSLVFWTMTILVTMEYA), 97-117 (VAFAGFLSFVGVSLLLGDGVI), 138-158 (GLSTGTLVAIAAAIAIGLFSV), 166-186 (VAGAFGPIMAVWFSTLAVTGV), 212-232 (GLAGYFVLSEVILCSTGGEAL), 248-268 (WYFVFMALYLNYLGQGVFAIT), 287-307 (LYIPFLILTIMATIIASQSII), 339-359 (IYLGAVNWSLMVAVILVMLLF), 368-388 (AYGMAVTGSMTITGIMMIIVF), 397-417 (ALVALVITLIDAAYLLSTFSK), and 418-438 (IPHGAYWSLILASIPFVTIII).

The protein belongs to the HAK/KUP transporter (TC 2.A.72) family.

Its subcellular location is the cell inner membrane. It carries out the reaction K(+)(in) + H(+)(in) = K(+)(out) + H(+)(out). Its function is as follows. Transport of potassium into the cell. Likely operates as a K(+):H(+) symporter. The chain is Probable potassium transport system protein Kup 1 from Geobacter metallireducens (strain ATCC 53774 / DSM 7210 / GS-15).